The sequence spans 111 residues: Universal stress protein B (111 aa).

A run of 2 helical transmembrane segments spans residues 1–21 and 90–110; these read MIST…NMAR and FILT…LMIW.

This sequence belongs to the universal stress protein B family.

The protein localises to the cell inner membrane. The protein is Universal stress protein B of Escherichia coli O45:K1 (strain S88 / ExPEC).